We begin with the raw amino-acid sequence, 371 residues long: Queuine tRNA-ribosyltransferase (371 aa).

The active-site Proton acceptor is Asp89. Substrate contacts are provided by residues Asp89–Phe93, Asp143, Gln185, and Gly212. The interval Gly243–Asp249 is RNA binding. The Nucleophile role is filled by Asp262. Residues Thr267 to Arg271 are RNA binding; important for wobble base 34 recognition. The Zn(2+) site is built by Cys300, Cys302, Cys305, and His331.

This sequence belongs to the queuine tRNA-ribosyltransferase family. In terms of assembly, homodimer. Within each dimer, one monomer is responsible for RNA recognition and catalysis, while the other monomer binds to the replacement base PreQ1. Zn(2+) serves as cofactor.

The catalysed reaction is 7-aminomethyl-7-carbaguanine + guanosine(34) in tRNA = 7-aminomethyl-7-carbaguanosine(34) in tRNA + guanine. Its pathway is tRNA modification; tRNA-queuosine biosynthesis. In terms of biological role, catalyzes the base-exchange of a guanine (G) residue with the queuine precursor 7-aminomethyl-7-deazaguanine (PreQ1) at position 34 (anticodon wobble position) in tRNAs with GU(N) anticodons (tRNA-Asp, -Asn, -His and -Tyr). Catalysis occurs through a double-displacement mechanism. The nucleophile active site attacks the C1' of nucleotide 34 to detach the guanine base from the RNA, forming a covalent enzyme-RNA intermediate. The proton acceptor active site deprotonates the incoming PreQ1, allowing a nucleophilic attack on the C1' of the ribose to form the product. After dissociation, two additional enzymatic reactions on the tRNA convert PreQ1 to queuine (Q), resulting in the hypermodified nucleoside queuosine (7-(((4,5-cis-dihydroxy-2-cyclopenten-1-yl)amino)methyl)-7-deazaguanosine). This Thioalkalivibrio sulfidiphilus (strain HL-EbGR7) protein is Queuine tRNA-ribosyltransferase.